We begin with the raw amino-acid sequence, 142 residues long: Transcriptional regulator MraZ (142 aa).

SpoVT-AbrB domains follow at residues 5 to 51 (ASAL…PRPE) and 77 to 120 (AADV…DAAT).

This sequence belongs to the MraZ family. As to quaternary structure, forms oligomers.

The protein resides in the cytoplasm. Its subcellular location is the nucleoid. The protein is Transcriptional regulator MraZ of Cupriavidus pinatubonensis (strain JMP 134 / LMG 1197) (Cupriavidus necator (strain JMP 134)).